We begin with the raw amino-acid sequence, 230 residues long: MDSKKHKIINGYYHKNCISCKSWLPATEENFYSVKKNKDGLHSYCKACVLKKAKESMLKNYDKQLERMRERNLLPGMKEAKKKYNSSLKKKKTQQIWQEKNKLKLKNYRLQRDAHKKHNITDVQWQKCKDYFNNKCSYCGLKIEDHKILFKGTYIQSDFHKEHVDHKGANDISNCIPACKSCNSSKHDFAFEEWYNSSNKNFSSERLLKIKEWLNRFKEERQDSEWRTKG.

The 53-residue stretch at 136–188 (CSYCGLKIEDHKILFKGTYIQSDFHKEHVDHKGANDISNCIPACKSCNSSKHD) folds into the HNH domain.

This sequence belongs to the HNH nuclease family.

The polypeptide is SPbeta prophage-derived putative HNH endonuclease YoqL (yoqL) (Bacillus subtilis (strain 168)).